The chain runs to 164 residues: Cytochrome c oxidase subunit 4, mitochondrial (164 aa).

A mitochondrion-targeting transit peptide spans 1-33 (MFMNSMLRVSRQRAAVRSTVSLYRGFVSASIRR). Residues C120, H128, C143, and C146 each contribute to the Zn(2+) site.

It belongs to the cytochrome c oxidase subunit 5B family. As to quaternary structure, component of the cytochrome c oxidase (complex IV, CIV), a multisubunit enzyme composed of a catalytic core of 3 subunits and several supernumerary subunits. The complex exists as a monomer or a dimer and forms supercomplexes (SCs) in the inner mitochondrial membrane with ubiquinol-cytochrome c oxidoreductase (cytochrome b-c1 complex, complex III, CIII).

Its subcellular location is the mitochondrion inner membrane. Its pathway is energy metabolism; oxidative phosphorylation. Functionally, component of the cytochrome c oxidase, the last enzyme in the mitochondrial electron transport chain which drives oxidative phosphorylation. The respiratory chain contains 3 multisubunit complexes succinate dehydrogenase (complex II, CII), ubiquinol-cytochrome c oxidoreductase (cytochrome b-c1 complex, complex III, CIII) and cytochrome c oxidase (complex IV, CIV), that cooperate to transfer electrons derived from NADH and succinate to molecular oxygen, creating an electrochemical gradient over the inner membrane that drives transmembrane transport and the ATP synthase. Cytochrome c oxidase is the component of the respiratory chain that catalyzes the reduction of oxygen to water. Electrons originating from reduced cytochrome c in the intermembrane space (IMS) are transferred via the dinuclear copper A center (CU(A)) of subunit 2 and heme A of subunit 1 to the active site in subunit 1, a binuclear center (BNC) formed by heme A3 and copper B (CU(B)). The BNC reduces molecular oxygen to 2 water molecules using 4 electrons from cytochrome c in the IMS and 4 protons from the mitochondrial matrix. The polypeptide is Cytochrome c oxidase subunit 4, mitochondrial (cox4) (Schizosaccharomyces pombe (strain 972 / ATCC 24843) (Fission yeast)).